Reading from the N-terminus, the 59-residue chain is UPF0434 protein PBPRA2383 (59 aa).

This sequence belongs to the UPF0434 family.

This is UPF0434 protein PBPRA2383 from Photobacterium profundum (strain SS9).